The following is a 140-amino-acid chain: Large ribosomal subunit protein uL13 (140 aa).

Belongs to the universal ribosomal protein uL13 family. As to quaternary structure, part of the 50S ribosomal subunit.

Its function is as follows. This protein is one of the early assembly proteins of the 50S ribosomal subunit, although it is not seen to bind rRNA by itself. It is important during the early stages of 50S assembly. In Sulfurimonas denitrificans (strain ATCC 33889 / DSM 1251) (Thiomicrospira denitrificans (strain ATCC 33889 / DSM 1251)), this protein is Large ribosomal subunit protein uL13.